A 203-amino-acid chain; its full sequence is MARFRGSITKVSRRLGVALSPKAEKYLEKRPYAPGEHGQSRRGKVSEYALQLREKQKMKYLYGVLEKQFRNYYKKAVSQRGITGDNLVKLLERRFDNVVFRAGFSPSRAGARQLVTHGHLLINGKKVDIPSYLLKPGDAMEFRQKSQNLDAVADSMNRAPDSRIPSWIQVDKAHKKAVFLAVPEREEVQEPFNEQLVVELYSK.

Residues 93–153 (RRFDNVVFRA…QKSQNLDAVA (61 aa)) enclose the S4 RNA-binding domain.

The protein belongs to the universal ribosomal protein uS4 family. In terms of assembly, part of the 30S ribosomal subunit. Contacts protein S5. The interaction surface between S4 and S5 is involved in control of translational fidelity.

In terms of biological role, one of the primary rRNA binding proteins, it binds directly to 16S rRNA where it nucleates assembly of the body of the 30S subunit. Functionally, with S5 and S12 plays an important role in translational accuracy. The protein is Small ribosomal subunit protein uS4 of Chlorobium phaeobacteroides (strain BS1).